A 449-amino-acid polypeptide reads, in one-letter code: MSAPMSASTSVVTRFAPSPTGFLHVGNLRTALFNFLIAKKAGGEFILRLDDTDPERSTQAFADAIQEDMEWLGLTWDRIERQSDRFDRYAAAADELRAKNRFYEAWETPTELDLKRKKQLNMHQPPVYDRAALALTDDQKEALRAERGQGVWRFKLDHQRIEWTDGILGDLSIDAASVSDPVLIRADGQVLYTIASVVDDTDMGVTHVVRGSDHVTNTATQIQIMEALGKSAPSFAHHSLLTGPQGEALSKRLGTLALRDLREAGMEPMALLSHMARIGSSQPVELAGSVEELAEGFDLNHFGSAPTKFDVEDLWPLTASVLHGTAFEDVAGEIAALGVPADIAPAFWEVARANIGKRAEIADWWALFRDGATPLVADEDREFVAQAFAMLPDLPYDETTWSNWTSAVKEATGRKGKGLFMPLRKAVTGRERGPEMADVMRLMQVKPTL.

Residues 17-27 (PSPTGFLHVGN) carry the 'HIGH' region motif. The 'KMSKS' region signature appears at 248–252 (ALSKR). An ATP-binding site is contributed by K251.

Belongs to the class-I aminoacyl-tRNA synthetase family. Glutamate--tRNA ligase type 1 subfamily. As to quaternary structure, monomer.

The protein localises to the cytoplasm. The catalysed reaction is tRNA(Glu) + L-glutamate + ATP = L-glutamyl-tRNA(Glu) + AMP + diphosphate. Catalyzes the attachment of glutamate to tRNA(Glu) in a two-step reaction: glutamate is first activated by ATP to form Glu-AMP and then transferred to the acceptor end of tRNA(Glu). The polypeptide is Glutamate--tRNA ligase 2 (Jannaschia sp. (strain CCS1)).